The sequence spans 397 residues: Acetate kinase 2 (397 aa).

Asparagine 10 is a Mg(2+) binding site. Lysine 17 serves as a coordination point for ATP. Arginine 90 is a substrate binding site. Residue aspartate 147 is the Proton donor/acceptor of the active site. Residues 207-211 (HLGNG), 281-283 (DAR), and 329-333 (GIGEN) contribute to the ATP site. Glutamate 385 lines the Mg(2+) pocket.

Belongs to the acetokinase family. Homodimer. Mg(2+) serves as cofactor. Mn(2+) is required as a cofactor.

The protein localises to the cytoplasm. The catalysed reaction is acetate + ATP = acetyl phosphate + ADP. It participates in metabolic intermediate biosynthesis; acetyl-CoA biosynthesis; acetyl-CoA from acetate: step 1/2. In terms of biological role, catalyzes the formation of acetyl phosphate from acetate and ATP. Can also catalyze the reverse reaction. This Vibrio vulnificus (strain CMCP6) protein is Acetate kinase 2.